The primary structure comprises 371 residues: Deoxyhypusine synthase (371 aa).

Residues 107–111 (SNLIS), 133–135 (TTG), E139, and D240 contribute to the NAD(+) site. 138–139 (EE) contacts spermidine. Spermidine is bound at residue D245. G287 contacts NAD(+). Residue H292 participates in spermidine binding. 312 to 313 (TA) is an NAD(+) binding site. Spermidine-binding positions include 318-320 (GSD) and 327-333 (EAVSWGK). The Nucleophile role is filled by K333. 346-347 (DA) provides a ligand contact to NAD(+).

Belongs to the deoxyhypusine synthase family. Requires NAD(+) as cofactor. In terms of tissue distribution, expressed in shoot tips.

The enzyme catalyses [eIF5A protein]-L-lysine + spermidine = [eIF5A protein]-deoxyhypusine + propane-1,3-diamine. The protein operates within protein modification; eIF5A hypusination. Its function is as follows. Catalyzes the NAD-dependent oxidative cleavage of spermidine and the subsequent transfer of the butylamine moiety of spermidine to the epsilon-amino group of a specific lysine residue of the eIF-5A precursor protein to form the intermediate deoxyhypusine residue. Also able to produce homospermidine from putrescine. The sequence is that of Deoxyhypusine synthase (DHS1) from Senecio vernalis (Spring groundsel).